The following is a 130-amino-acid chain: Small ribosomal subunit protein uS8 (130 aa).

This sequence belongs to the universal ribosomal protein uS8 family. As to quaternary structure, part of the 30S ribosomal subunit. Contacts proteins S5 and S12.

One of the primary rRNA binding proteins, it binds directly to 16S rRNA central domain where it helps coordinate assembly of the platform of the 30S subunit. This is Small ribosomal subunit protein uS8 from Buchnera aphidicola subsp. Baizongia pistaciae (strain Bp).